Consider the following 338-residue polypeptide: Queuosine 5'-phosphate N-glycosylase/hydrolase (338 aa).

An N-acetylmethionine modification is found at M1. 6 residues coordinate queuine: H51, F235, D237, D311, Y312, and D316. The active-site Nucleophile or transition state stabilizer is D237.

This sequence belongs to the QNG1 protein family. In terms of tissue distribution, highly expressed in liver.

It catalyses the reaction queuosine 5'-phosphate + H2O = queuine + D-ribose 5-phosphate. Catalyzes the hydrolysis of queuosine 5'-phosphate, releasing the nucleobase queuine (q). Is required for salvage of queuine from exogenous queuosine (Q) that is imported and then converted to queuosine 5'-phosphate intracellularly. The protein is Queuosine 5'-phosphate N-glycosylase/hydrolase of Mus musculus (Mouse).